A 170-amino-acid chain; its full sequence is Adenine phosphoribosyltransferase (170 aa).

It belongs to the purine/pyrimidine phosphoribosyltransferase family. Homodimer.

It is found in the cytoplasm. The enzyme catalyses AMP + diphosphate = 5-phospho-alpha-D-ribose 1-diphosphate + adenine. The protein operates within purine metabolism; AMP biosynthesis via salvage pathway; AMP from adenine: step 1/1. Catalyzes a salvage reaction resulting in the formation of AMP, that is energically less costly than de novo synthesis. This Thermotoga neapolitana (strain ATCC 49049 / DSM 4359 / NBRC 107923 / NS-E) protein is Adenine phosphoribosyltransferase.